Here is a 452-residue protein sequence, read N- to C-terminus: Fructose-2,6-bisphosphatase (452 aa).

A 6-phosphofructo-2-kinase region spans residues 1–223; it reads MGYSTISNDN…VFYVMNIRPK (223 aa). Residue 20-28 coordinates ATP; that stretch reads GLPARGKSF. The beta-D-fructose 6-phosphate site is built by R53 and R78. D104 is an active-site residue. Residues T106 and R112 each coordinate beta-D-fructose 6-phosphate. Residue 143–148 coordinates ATP; it reads NAKDIG. Beta-D-fructose 6-phosphate-binding residues include R169 and Y173. Positions 224–452 are fructose-2,6-bisphosphatase; the sequence is PKYIWLSRHG…LNDSPLEDKF (229 aa). Residue R231 participates in beta-D-fructose 2,6-bisphosphate binding. H232 acts as the Tele-phosphohistidine intermediate in catalysis. Beta-D-fructose 2,6-bisphosphate is bound by residues N238 and G244. The Proton donor/acceptor role is filled by E302. Beta-D-fructose 2,6-bisphosphate is bound by residues Y313, R327, K331, Y342, Q368, and R372. An ATP-binding site is contributed by 324-327; sequence FKAR. Residues 368-372 and Y404 each bind ATP; that span reads QAVLR. 2 positions are modified to phosphoserine: S435 and S446.

It in the C-terminal section; belongs to the phosphoglycerate mutase family.

It catalyses the reaction beta-D-fructose 2,6-bisphosphate + H2O = beta-D-fructose 6-phosphate + phosphate. With respect to regulation, inhibited by fructose 6-P, activated by glycerol 3-P. Functionally, monofunctional, high-specificity fructose-2,6-bisphosphatase, which releases phosphate from the 2-position of fructose 2,6-bisphosphate. Has no detectable 6-phosphofructo-2-kinase activity. This chain is Fructose-2,6-bisphosphatase, found in Saccharomyces cerevisiae (strain ATCC 204508 / S288c) (Baker's yeast).